The sequence spans 256 residues: tRNA pseudouridine synthase A (256 aa).

The Nucleophile role is filled by aspartate 52. Position 111 (tyrosine 111) interacts with substrate.

The protein belongs to the tRNA pseudouridine synthase TruA family. As to quaternary structure, homodimer.

It carries out the reaction uridine(38/39/40) in tRNA = pseudouridine(38/39/40) in tRNA. Formation of pseudouridine at positions 38, 39 and 40 in the anticodon stem and loop of transfer RNAs. The polypeptide is tRNA pseudouridine synthase A (Paramagnetospirillum magneticum (strain ATCC 700264 / AMB-1) (Magnetospirillum magneticum)).